The following is a 523-amino-acid chain: ATP synthase subunit alpha (523 aa).

ATP is bound at residue 179–186 (GDRQTGKT).

This sequence belongs to the ATPase alpha/beta chains family. In terms of assembly, F-type ATPases have 2 components, CF(1) - the catalytic core - and CF(0) - the membrane proton channel. CF(1) has five subunits: alpha(3), beta(3), gamma(1), delta(1), epsilon(1). CF(0) has three main subunits: a(1), b(2) and c(9-12). The alpha and beta chains form an alternating ring which encloses part of the gamma chain. CF(1) is attached to CF(0) by a central stalk formed by the gamma and epsilon chains, while a peripheral stalk is formed by the delta and b chains.

Its subcellular location is the cell inner membrane. It catalyses the reaction ATP + H2O + 4 H(+)(in) = ADP + phosphate + 5 H(+)(out). In terms of biological role, produces ATP from ADP in the presence of a proton gradient across the membrane. The alpha chain is a regulatory subunit. This Vibrio vulnificus (strain YJ016) protein is ATP synthase subunit alpha.